The primary structure comprises 1077 residues: Insulin receptor substrate 2-B (1077 aa).

Residues 1-66 are disordered; the sequence is MAGVLCPTEE…APASTAEDDV (66 aa). 2 short sequence motifs (YXXM motif) span residues 33 to 36 and 147 to 150; these read YRRM and YFAM. The PH domain occupies 65–170; that stretch reads DVRKRGYLRK…WYQALSELIN (106 aa). The IRS-type PTB domain occupies 195–299; it reads FKEVWQVNVK…DTMKALKAYS (105 aa). Disordered stretches follow at residues 342–373, 428–464, and 476–495; these read ETVV…RPFR, VCSS…SDEY, and VRSN…EENT. Polar residues-rich tracts occupy residues 350–364 and 428–444; these read SAKN…SSEG and VCSS…LTRP. Low complexity predominate over residues 445 to 457; that stretch reads SSSSVCGSPSDGG. Residues 477–495 show a composition bias toward polar residues; it reads RSNTPDSLGNTPPIQEENT. The short motif at 499–502 is the YXXM motif 3 element; it reads YMSM. A compositionally biased stretch (polar residues) spans 530–544; the sequence is KPTNAASQQKSQTAV. The segment at 530–571 is disordered; sequence KPTNAASQQKSQTAVSLDEDSEETNKQFAYAESPKLKDSSHV. 6 short sequence motifs (YXXM motif) span residues 595-598, 608-611, 634-637, 666-669, 713-716, and 891-894; these read YMPM, YLPM, YMMM, YMDM, YVPM, and YTTM.

Post-translationally, phosphorylated by INSR.

In terms of biological role, potentiates insulin signaling. The chain is Insulin receptor substrate 2-B (irs2-b) from Xenopus laevis (African clawed frog).